The primary structure comprises 106 residues: Large ribosomal subunit protein P2 (106 aa).

The disordered stretch occupies residues 80-106; sequence AAAAPAKKVVEEKKEESDDDMGMGLFD.

The protein belongs to the eukaryotic ribosomal protein P1/P2 family. In terms of assembly, P1 and P2 exist as dimers at the large ribosomal subunit. In terms of processing, phosphorylated.

Plays an important role in the elongation step of protein synthesis. In Dictyostelium discoideum (Social amoeba), this protein is Large ribosomal subunit protein P2 (rplp2).